The following is a 426-amino-acid chain: Proline--tRNA ligase (426 aa).

It belongs to the class-II aminoacyl-tRNA synthetase family. ProS type 2 subfamily. In terms of assembly, homodimer.

It is found in the cytoplasm. The catalysed reaction is tRNA(Pro) + L-proline + ATP = L-prolyl-tRNA(Pro) + AMP + diphosphate. Catalyzes the attachment of proline to tRNA(Pro) in a two-step reaction: proline is first activated by ATP to form Pro-AMP and then transferred to the acceptor end of tRNA(Pro). This chain is Proline--tRNA ligase, found in Rickettsia africae (strain ESF-5).